An 82-amino-acid chain; its full sequence is Toxin TdNa6 (82 aa).

The first 20 residues, 1 to 20 (MKGMIMLISCLMLIEVVVGG), serve as a signal peptide directing secretion. One can recognise an LCN-type CS-alpha/beta domain in the interval 21-82 (KEGYLLDRSN…KMWHLKTNKC (62 aa)). 4 cysteine pairs are disulfide-bonded: Cys32/Cys82, Cys36/Cys58, Cys44/Cys63, and Cys48/Cys65.

This sequence belongs to the long (4 C-C) scorpion toxin superfamily. Sodium channel inhibitor family. Beta subfamily. In terms of tissue distribution, expressed by the venom gland.

It is found in the secreted. Beta toxins bind voltage-independently at site-4 of sodium channels (Nav) and shift the voltage of activation toward more negative potentials thereby affecting sodium channel activation and promoting spontaneous and repetitive firing. Is toxic to arthropods. This Tityus discrepans (Venezuelan scorpion) protein is Toxin TdNa6.